Reading from the N-terminus, the 349-residue chain is GTP 3',8-cyclase (349 aa).

The Radical SAM core domain occupies proline 24 to proline 249. A GTP-binding site is contributed by arginine 33. [4Fe-4S] cluster-binding residues include cysteine 40 and cysteine 44. Tyrosine 46 is a binding site for S-adenosyl-L-methionine. Cysteine 47 provides a ligand contact to [4Fe-4S] cluster. GTP is bound at residue arginine 82. S-adenosyl-L-methionine is bound at residue glycine 86. Residue threonine 116 coordinates GTP. Residue serine 140 coordinates S-adenosyl-L-methionine. Position 176 (lysine 176) interacts with GTP. Methionine 210 provides a ligand contact to S-adenosyl-L-methionine. [4Fe-4S] cluster contacts are provided by cysteine 273 and cysteine 276. Residue arginine 278 to arginine 280 participates in GTP binding. Cysteine 290 serves as a coordination point for [4Fe-4S] cluster.

The protein belongs to the radical SAM superfamily. MoaA family. Monomer and homodimer. [4Fe-4S] cluster is required as a cofactor.

The enzyme catalyses GTP + AH2 + S-adenosyl-L-methionine = (8S)-3',8-cyclo-7,8-dihydroguanosine 5'-triphosphate + 5'-deoxyadenosine + L-methionine + A + H(+). It functions in the pathway cofactor biosynthesis; molybdopterin biosynthesis. Its function is as follows. Catalyzes the cyclization of GTP to (8S)-3',8-cyclo-7,8-dihydroguanosine 5'-triphosphate. In Agrobacterium fabrum (strain C58 / ATCC 33970) (Agrobacterium tumefaciens (strain C58)), this protein is GTP 3',8-cyclase.